Here is a 526-residue protein sequence, read N- to C-terminus: Tyrosine-protein kinase transforming protein Src (526 aa).

The tract at residues 1–57 (MGSSKSKPKDPSQRRRSLEPPDSTHHGGFPASQTPNKTAAPDTHRTPSRSFGTVATE) is disordered. Gly-2 carries N-myristoyl glycine; by host lipidation. The span at 7 to 25 (KPKDPSQRRRSLEPPDSTH) shows a compositional bias: basic and acidic residues. The region spanning 81-142 (GGVTTFVALY…PSNYVAPSDS (62 aa)) is the SH3 domain. The SH2 domain maps to 148-245 (WYFGKITRRE…GLCHRLTNVC (98 aa)). In terms of domain architecture, Protein kinase spans 267-517 (LRLEVKLGQG…TFEYLQAQLL (251 aa)). Residues 273–281 (LGQGCFGEV) and Lys-295 contribute to the ATP site. Asp-386 acts as the Proton acceptor in catalysis. Tyr-416 is subject to Phosphotyrosine; by autocatalysis.

This sequence belongs to the protein kinase superfamily. Tyr protein kinase family. SRC subfamily. In terms of assembly, homodimer. In terms of processing, the phosphorylated form is termed pp60v-src.

The enzyme catalyses L-tyrosyl-[protein] + ATP = O-phospho-L-tyrosyl-[protein] + ADP + H(+). Its function is as follows. This phosphoprotein, required for both the initiation and the maintenance of neoplastic transformation, is a protein kinase that catalyzes the phosphorylation of tyrosine residues in vitro. Causes mitotic slippage in addition to cytokinesis failure in the host cell. Phosphorylates and attenuates the activity of host CDK1, possibly causing the mitotic slippage. The protein is Tyrosine-protein kinase transforming protein Src (V-SRC) of Rous sarcoma virus subgroup A (strain Schmidt-Ruppin) (RSV-SR-A).